Consider the following 155-residue polypeptide: Putative pre-16S rRNA nuclease (155 aa).

This sequence belongs to the YqgF nuclease family.

It localises to the cytoplasm. Could be a nuclease involved in processing of the 5'-end of pre-16S rRNA. This chain is Putative pre-16S rRNA nuclease, found in Wolbachia sp. subsp. Brugia malayi (strain TRS).